The following is a 335-amino-acid chain: Pyridoxal 5'-phosphate synthase subunit PdxS (335 aa).

Asp30 contacts D-ribose 5-phosphate. Lys87 acts as the Schiff-base intermediate with D-ribose 5-phosphate in catalysis. Position 159 (Gly159) interacts with D-ribose 5-phosphate. Residue Arg171 participates in D-glyceraldehyde 3-phosphate binding. D-ribose 5-phosphate-binding positions include Gly257 and 278–279 (GS).

This sequence belongs to the PdxS/SNZ family. As to quaternary structure, in the presence of PdxT, forms a dodecamer of heterodimers.

The enzyme catalyses aldehydo-D-ribose 5-phosphate + D-glyceraldehyde 3-phosphate + L-glutamine = pyridoxal 5'-phosphate + L-glutamate + phosphate + 3 H2O + H(+). The protein operates within cofactor biosynthesis; pyridoxal 5'-phosphate biosynthesis. Catalyzes the formation of pyridoxal 5'-phosphate from ribose 5-phosphate (RBP), glyceraldehyde 3-phosphate (G3P) and ammonia. The ammonia is provided by the PdxT subunit. Can also use ribulose 5-phosphate and dihydroxyacetone phosphate as substrates, resulting from enzyme-catalyzed isomerization of RBP and G3P, respectively. This chain is Pyridoxal 5'-phosphate synthase subunit PdxS, found in Thermococcus onnurineus (strain NA1).